A 314-amino-acid chain; its full sequence is Thymidylate synthase (314 aa).

Residues R21 and 176–177 (RR) contribute to the dUMP site. C196 functions as the Nucleophile in the catalytic mechanism. DUMP-binding positions include 216–219 (RSAD), N227, and 257–259 (HLY). D219 provides a ligand contact to (6R)-5,10-methylene-5,6,7,8-tetrahydrofolate. S313 serves as a coordination point for (6R)-5,10-methylene-5,6,7,8-tetrahydrofolate.

It belongs to the thymidylate synthase family. Bacterial-type ThyA subfamily. Homodimer.

Its subcellular location is the cytoplasm. The enzyme catalyses dUMP + (6R)-5,10-methylene-5,6,7,8-tetrahydrofolate = 7,8-dihydrofolate + dTMP. Its pathway is pyrimidine metabolism; dTTP biosynthesis. Functionally, catalyzes the reductive methylation of 2'-deoxyuridine-5'-monophosphate (dUMP) to 2'-deoxythymidine-5'-monophosphate (dTMP) while utilizing 5,10-methylenetetrahydrofolate (mTHF) as the methyl donor and reductant in the reaction, yielding dihydrofolate (DHF) as a by-product. This enzymatic reaction provides an intracellular de novo source of dTMP, an essential precursor for DNA biosynthesis. The polypeptide is Thymidylate synthase (Listeria monocytogenes serotype 4a (strain HCC23)).